The following is a 289-amino-acid chain: Bifunctional protein FolD (289 aa).

NADP(+)-binding positions include 165 to 167 (GAS) and S190.

Belongs to the tetrahydrofolate dehydrogenase/cyclohydrolase family. In terms of assembly, homodimer.

The enzyme catalyses (6R)-5,10-methylene-5,6,7,8-tetrahydrofolate + NADP(+) = (6R)-5,10-methenyltetrahydrofolate + NADPH. The catalysed reaction is (6R)-5,10-methenyltetrahydrofolate + H2O = (6R)-10-formyltetrahydrofolate + H(+). It functions in the pathway one-carbon metabolism; tetrahydrofolate interconversion. Functionally, catalyzes the oxidation of 5,10-methylenetetrahydrofolate to 5,10-methenyltetrahydrofolate and then the hydrolysis of 5,10-methenyltetrahydrofolate to 10-formyltetrahydrofolate. In Ralstonia pickettii (strain 12J), this protein is Bifunctional protein FolD.